The sequence spans 526 residues: Protein DETOXIFICATION 43 (526 aa).

At 1-36 (MTETGDDLATVKKPIPFLVIFKDLRHVFSRDTTGRE) the chain is on the cytoplasmic side. The chain crosses the membrane as a helical span at residues 37–57 (ILGIAFPAALALAADPIASLI). Topologically, residues 58–59 (DT) are extracellular. Residues 60-80 (AFVGRLGAVQLAAVGVSIAIF) form a helical membrane-spanning segment. Residues 81-170 (NQASRITIFP…NKKEKRTIRT (90 aa)) lie on the Cytoplasmic side of the membrane. The disordered stretch occupies residues 133-166 (ISSPTSNDTNQPQQPPAPDTKSNSGNKSNKKEKR). Positions 134–144 (SSPTSNDTNQP) are enriched in polar residues. The helical transmembrane segment at 171 to 191 (ASTAMILGLILGLVQAIFLIF) threads the bilayer. Topologically, residues 192–215 (SSKLLLGVMGVKPNSPMLSPAHKY) are extracellular. The chain crosses the membrane as a helical span at residues 216-236 (LSIRALGAPALLLSLAMQGIF). Residues 237–244 (RGFKDTKT) are Cytoplasmic-facing. Residues 245–267 (PLFATVVADVINIVLDPIFIFVL) form a helical membrane-spanning segment. The Extracellular portion of the chain corresponds to 268–270 (RLG). The helical transmembrane segment at 271 to 293 (IIGAAIAHVISQYFMTLILFVFL) threads the bilayer. Topologically, residues 294–316 (AKKVNLIPPNFGDLQFGRFLKNG) are cytoplasmic. The chain crosses the membrane as a helical span at residues 317-337 (LLLLARTIAVTFCQTLAAAMA). Topologically, residues 338–353 (ARLGTTPMAAFQICLQ) are extracellular. A helical transmembrane segment spans residues 354 to 374 (VWLTSSLLNDGLAVAGQAILA). Residues 375-396 (CSFAEKDYNKVTAVASRVLQMG) are Cytoplasmic-facing. A helical transmembrane segment spans residues 397–417 (FVLGLGLSVFVGLGLYFGAGV). The Extracellular portion of the chain corresponds to 418–426 (FSKDPAVIH). A helical transmembrane segment spans residues 427 to 447 (LMAIGIPFIAATQPINSLAFV). At 448-457 (LDGVNFGASD) the chain is on the cytoplasmic side. Residues 458 to 478 (FAYTAYSMVGVAAISIAAVIY) traverse the membrane as a helical segment. Residues 479–484 (MAKTNG) lie on the Extracellular side of the membrane. Residues 485 to 505 (FIGIWIALTIYMALRAITGIA) traverse the membrane as a helical segment. The Cytoplasmic segment spans residues 506–526 (RMATGTGPWRFLRGRSSSSSS).

The protein belongs to the multi antimicrobial extrusion (MATE) (TC 2.A.66.1) family. In terms of tissue distribution, expressed in roots in the pericycle and cells internal to the pericycle and surrounding the vascular tissue. Also expressed in seed and flower.

The protein resides in the cell membrane. In terms of biological role, citrate transporter responsible for loading citrate into xylem tissues, which helps facilitate iron transport to shoots. Mediates the citrate release in the apoplastic spaces during plant development allowing iron nutrition between symplastically disconnected tissues. The polypeptide is Protein DETOXIFICATION 43 (Arabidopsis thaliana (Mouse-ear cress)).